The chain runs to 303 residues: L(+)-tartrate dehydratase subunit alpha (303 aa).

3 residues coordinate iron-sulfur cluster: C71, C190, and C277.

It belongs to the class-I fumarase family. In terms of assembly, tetramer of two alpha and two beta subunits. The cofactor is iron-sulfur cluster.

The enzyme catalyses (2R,3R)-tartrate = oxaloacetate + H2O. The polypeptide is L(+)-tartrate dehydratase subunit alpha (ttdA) (Escherichia coli O6:H1 (strain CFT073 / ATCC 700928 / UPEC)).